Reading from the N-terminus, the 236-residue chain is Small ribosomal subunit protein uS2 (236 aa).

It belongs to the universal ribosomal protein uS2 family.

The polypeptide is Small ribosomal subunit protein uS2 (Brevibacillus brevis (strain 47 / JCM 6285 / NBRC 100599)).